We begin with the raw amino-acid sequence, 323 residues long: MAEAAITRYWCHECEQAIEEAMVDEIKCPSCGGGFVEEMTDEEIERLTNRQPEPGFSQWNPIEHPGETMDSDDEDNDLGREFEGFIRRHRRASTLRRVLDSIHDDLADDQERDSSILINAFNQALALQGSVLDPDEGQGDQGGSTNDDGLLEEYVLGAGLSLLLQHLAESDPSRNGTPPAKKEAVEALPTVKIEEVVSCSVCLDDLEVGSQAKQMPCEHKFHSSCILPWLELHSSCPVCRFELPSEETKDLNEPSNIGRVEDSHEEVRADGPGNVSESSNRPWAIVPWLNELFSTREAQNAGGVSTDQQSPHTSGTNPNAGHS.

Residues 199-240 (CSVCLDDLEVGSQAKQMPCEHKFHSSCILPWLELHSSCPVCR) form an RING-type; atypical zinc finger. Disordered regions lie at residues 248 to 280 (TKDLNEPSNIGRVEDSHEEVRADGPGNVSESSN) and 296 to 323 (REAQNAGGVSTDQQSPHTSGTNPNAGHS). Residues 259-269 (RVEDSHEEVRA) show a composition bias toward basic and acidic residues.

The protein resides in the cytoplasm. It carries out the reaction S-ubiquitinyl-[E2 ubiquitin-conjugating enzyme]-L-cysteine + [acceptor protein]-L-lysine = [E2 ubiquitin-conjugating enzyme]-L-cysteine + N(6)-ubiquitinyl-[acceptor protein]-L-lysine.. It functions in the pathway protein modification; protein ubiquitination. Its function is as follows. Possesses E3 ubiqutin-protein ligase activity in vitro. Acts as negative regulator of salinity stress tolerance mediated by the ubiquitin-proteasome degradation pathway. The polypeptide is E3 ubiquitin-protein ligase SIRP1 (Oryza sativa subsp. japonica (Rice)).